We begin with the raw amino-acid sequence, 317 residues long: Osteopontin (317 aa).

An N-terminal signal peptide occupies residues 1 to 16 (MRLAVVCFCLFGLASC). Phosphoserine occurs at positions 26, 27, 60, 62, and 63. The tract at residues 43-297 (WLKPDPSQKQ…LVLDPKSKED (255 aa)) is disordered. Residues 49-63 (SQKQNLLAPQNSVSS) are compositionally biased toward polar residues. Thr-66 carries the post-translational modification Phosphothreonine. 8 positions are modified to phosphoserine: Ser-76, Ser-78, Ser-81, Ser-106, Ser-109, Ser-112, Ser-115, and Ser-118. A compositionally biased stretch (acidic residues) spans 86–110 (DDDDDDDDDGDHAESEDSVNSDESD). Thr-123, Thr-132, and Thr-137 each carry an O-linked (GalNAc...) threonine glycan. The short motif at 144-146 (RGD) is the Cell attachment site element. Phosphothreonine occurs at positions 170 and 175. Positions 174–187 (LTSRMKSQESDEAI) are enriched in basic and acidic residues. A phosphoserine mark is found at Ser-176, Ser-180, Ser-200, Ser-204, Ser-209, Ser-213, and Ser-219. The span at 197–216 (SVPSDQDSNGKTSHESSQLD) shows a compositional bias: polar residues. O-linked (Xyl...) (chondroitin sulfate) serine glycosylation occurs at Ser-219. Phosphothreonine is present on Thr-222. 2 stretches are compositionally biased toward basic and acidic residues: residues 223–240 (HSLEQSKEYKQRASHEST) and 248–263 (SAEKPDAIDSAERSDA). Phosphoserine is present on residues Ser-224, Ser-228, Ser-257, Ser-261, Ser-266, Ser-270, Ser-273, Ser-278, Ser-283, Ser-294, Ser-306, Ser-311, Ser-313, and Ser-314. Positions 273-297 (SLEHQSHEFHSHEDKLVLDPKSKED) are enriched in basic and acidic residues. O-linked (Xyl...) (chondroitin sulfate) serine glycosylation is present at Ser-311.

This sequence belongs to the osteopontin family. In terms of assembly, interacts (via N-terminus) with integrin ITGA9:ITGB1. In terms of processing, extensively phosphorylated by FAM20C in the extracellular medium at multiple sites within the S-x-E/pS motif. The phosphorylated form inhibits hydroxyapatite crystallization. Dephosphorylation via a mechanism involving ALPL/TNAP promotes hydroxyapatite crystallization. Post-translationally, O-glycosylated. Forms covalent cross-links mediated by transglutaminase TGM2, between a glutamine and the epsilon-amino group of a lysine residue, forming homopolymers and heteropolymers, increasing its collagen binding properties.

The protein localises to the secreted. In terms of biological role, major non-collagenous bone protein that binds tightly to hydroxyapatite. Appears to form an integral part of the mineralized matrix. Probably important to cell-matrix interaction. Its function is as follows. Acts as a cytokine involved in enhancing production of interferon-gamma and interleukin-12 and reducing production of interleukin-10 and is essential in the pathway that leads to type I immunity. The polypeptide is Osteopontin (Spp1) (Rattus norvegicus (Rat)).